The sequence spans 450 residues: Phosphoglucosamine mutase (450 aa).

The active-site Phosphoserine intermediate is S101. Mg(2+)-binding residues include S101, D241, D243, and D245. S101 carries the phosphoserine modification.

It belongs to the phosphohexose mutase family. Mg(2+) is required as a cofactor. Post-translationally, activated by phosphorylation.

The catalysed reaction is alpha-D-glucosamine 1-phosphate = D-glucosamine 6-phosphate. Functionally, catalyzes the conversion of glucosamine-6-phosphate to glucosamine-1-phosphate. This chain is Phosphoglucosamine mutase, found in Ligilactobacillus salivarius (strain UCC118) (Lactobacillus salivarius).